The sequence spans 208 residues: V-type ATP synthase subunit D (208 aa).

It belongs to the V-ATPase D subunit family.

Produces ATP from ADP in the presence of a proton gradient across the membrane. This Streptococcus pyogenes serotype M6 (strain ATCC BAA-946 / MGAS10394) protein is V-type ATP synthase subunit D.